Consider the following 177-residue polypeptide: ATP synthase subunit delta (177 aa).

The protein belongs to the ATPase delta chain family. As to quaternary structure, F-type ATPases have 2 components, F(1) - the catalytic core - and F(0) - the membrane proton channel. F(1) has five subunits: alpha(3), beta(3), gamma(1), delta(1), epsilon(1). F(0) has three main subunits: a(1), b(2) and c(10-14). The alpha and beta chains form an alternating ring which encloses part of the gamma chain. F(1) is attached to F(0) by a central stalk formed by the gamma and epsilon chains, while a peripheral stalk is formed by the delta and b chains.

The protein resides in the cell inner membrane. Its function is as follows. F(1)F(0) ATP synthase produces ATP from ADP in the presence of a proton or sodium gradient. F-type ATPases consist of two structural domains, F(1) containing the extramembraneous catalytic core and F(0) containing the membrane proton channel, linked together by a central stalk and a peripheral stalk. During catalysis, ATP synthesis in the catalytic domain of F(1) is coupled via a rotary mechanism of the central stalk subunits to proton translocation. This protein is part of the stalk that links CF(0) to CF(1). It either transmits conformational changes from CF(0) to CF(1) or is implicated in proton conduction. In Klebsiella pneumoniae (strain 342), this protein is ATP synthase subunit delta.